The primary structure comprises 331 residues: Probable leucine carboxyl methyltransferase 1 (331 aa).

Residues Arg82, Gly107, Asp131, 179 to 180, and Glu206 contribute to the S-adenosyl-L-methionine site; that span reads DL.

This sequence belongs to the methyltransferase superfamily. LCMT family.

It carries out the reaction [phosphatase 2A protein]-C-terminal L-leucine + S-adenosyl-L-methionine = [phosphatase 2A protein]-C-terminal L-leucine methyl ester + S-adenosyl-L-homocysteine. Its function is as follows. Methylates the carboxyl group of the C-terminal leucine residue of protein phosphatase 2A catalytic subunits to form alpha-leucine ester residues. In Caenorhabditis briggsae, this protein is Probable leucine carboxyl methyltransferase 1.